The following is a 227-amino-acid chain: MDYRRLKDLPEELLPRERLFQYGADALSNREILAILLRTGVKGENVLDFSERLLTETGGLSGLARLTVHELTRYRGMGTAKAAELKAALELGRRSVSSDPLVRPVINSPQDIAHLVMEEMRYLDREHFRVVSLSTKNHVLGISSISVGSLNSSLVHPRECFKEAIRRNSNAIILLHNHPSGDPTPSSEDIDVTRRLSDGGQILGIEVLDHVIIGDNRYISLKERGIL.

The MPN domain occupies 105-227 (VINSPQDIAH…YISLKERGIL (123 aa)). Zn(2+) contacts are provided by His176, His178, and Asp189. The JAMM motif motif lies at 176 to 189 (HNHPSGDPTPSSED).

Belongs to the UPF0758 family.

The chain is UPF0758 protein Dhaf_4352 from Desulfitobacterium hafniense (strain DSM 10664 / DCB-2).